The primary structure comprises 210 residues: uncharacterized protein (210 aa).

A signal peptide spans methionine 1 to alanine 20. The Lumenal portion of the chain corresponds to isoleucine 21–arginine 175. Residues lysine 32–methionine 115 form the GOLD domain. Asparagine 165 carries N-linked (GlcNAc...) asparagine glycosylation. Residues isoleucine 176–phenylalanine 196 form a helical membrane-spanning segment. The Cytoplasmic segment spans residues isoleucine 197–valine 210.

Belongs to the EMP24/GP25L family.

It is found in the endoplasmic reticulum membrane. This is an uncharacterized protein from Schizosaccharomyces pombe (strain 972 / ATCC 24843) (Fission yeast).